The primary structure comprises 118 residues: Small nuclear ribonucleoprotein Sm D2 (118 aa).

The interval 1–31 (MSLLNKPKSEMTPEELQKREEEEFNTGPLSV) is disordered. Serine 2 is subject to N-acetylserine. Glycyl lysine isopeptide (Lys-Gly) (interchain with G-Cter in SUMO2) cross-links involve residues lysine 6 and lysine 8. A compositionally biased stretch (basic and acidic residues) spans 7–21 (PKSEMTPEELQKREE). Position 9 is a phosphoserine (serine 9). Residue threonine 12 is modified to Phosphothreonine. Residues 29 to 115 (LSVLTQSVKN…VIVVLRNPLI (87 aa)) enclose the Sm domain.

This sequence belongs to the snRNP core protein family. Core component of the spliceosomal U1, U2, U4 and U5 small nuclear ribonucleoproteins (snRNPs), the building blocks of the spliceosome. Most spliceosomal snRNPs contain a common set of Sm proteins, SNRPB, SNRPD1, SNRPD2, SNRPD3, SNRPE, SNRPF and SNRPG that assemble in a heptameric protein ring on the Sm site of the small nuclear RNA to form the core snRNP. Component of the U1 snRNP. The U1 snRNP is composed of the U1 snRNA and the 7 core Sm proteins SNRPB, SNRPD1, SNRPD2, SNRPD3, SNRPE, SNRPF and SNRPG, and at least three U1 snRNP-specific proteins SNRNP70/U1-70K, SNRPA/U1-A and SNRPC/U1-C. Component of the U4/U6-U5 tri-snRNP complex composed of the U4, U6 and U5 snRNAs and at least PRPF3, PRPF4, PRPF6, PRPF8, PRPF31, SNRNP200, TXNL4A, SNRNP40, SNRPB, SNRPD1, SNRPD2, SNRPD3, SNRPE, SNRPF, SNRPG, DDX23, CD2BP2, PPIH, SNU13, EFTUD2, SART1 and USP39, plus LSM2, LSM3, LSM4, LSM5, LSM6, LSM7 and LSM8. Component of the minor spliceosome, which splices U12-type introns. Part of the SMN-Sm complex that contains SMN1, GEMIN2/SIP1, DDX20/GEMIN3, GEMIN4, GEMIN5, GEMIN6, GEMIN7, GEMIN8, STRAP/UNRIP and the Sm proteins SNRPB, SNRPD1, SNRPD2, SNRPD3, SNRPE, SNRPF and SNRPG; catalyzes core snRNPs assembly. Forms a 6S pICln-Sm complex composed of CLNS1A/pICln, SNRPD1, SNRPD2, SNRPE, SNRPF and SNRPG; ring-like structure where CLNS1A/pICln mimics additional Sm proteins and which is unable to assemble into the core snRNP. Interacts with SMN1; the interaction is direct. Interacts with GEMIN2; the interaction is direct. Interacts with SNRPD1; the interaction is direct. Interacts with SNRPF; the interaction is direct.

The protein localises to the cytoplasm. The protein resides in the cytosol. It is found in the nucleus. Its function is as follows. Plays a role in pre-mRNA splicing as a core component of the spliceosomal U1, U2, U4 and U5 small nuclear ribonucleoproteins (snRNPs), the building blocks of the spliceosome. Component of both the pre-catalytic spliceosome B complex and activated spliceosome C complexes. As a component of the minor spliceosome, involved in the splicing of U12-type introns in pre-mRNAs. This Homo sapiens (Human) protein is Small nuclear ribonucleoprotein Sm D2 (SNRPD2).